The sequence spans 783 residues: Spindle pole body protein ppc89 (783 aa).

Ser157 is subject to Phosphoserine. Disordered stretches follow at residues 180–216 (FDSPTEALPPKPTTPWRRNGFRSKTTPNLNSGKETPS), 434–458 (KESNVTSKIKSTAENSSKPLSMNEA), 471–504 (ENKSGANTKEMSNGTETAKENCSPQQDSTSPTSG), and 528–610 (LSQS…MKGN). Polar residues-rich tracts occupy residues 201 to 216 (RSKTTPNLNSGKETPS), 437 to 453 (NVTSKIKSTAENSSKPL), and 474 to 504 (SGANTKEMSNGTETAKENCSPQQDSTSPTSG). The span at 536–551 (PVKHRKRRPKSKRRIT) shows a compositional bias: basic residues. Residues 566-590 (ESDEGSEEISLDSEYSDILSDDGDF) are compositionally biased toward acidic residues.

It localises to the cytoplasm. The protein resides in the cytoskeleton. Its subcellular location is the microtubule organizing center. The protein localises to the spindle pole body. Has a role in meiosis. This is Spindle pole body protein ppc89 (ppc89) from Schizosaccharomyces pombe (strain 972 / ATCC 24843) (Fission yeast).